Reading from the N-terminus, the 387-residue chain is Dual specificity protein phosphatase MPK-4 (387 aa).

Residues 1 to 15 (MEQSQSQRQAWPSSS) show a composition bias toward polar residues. The disordered stretch occupies residues 1–27 (MEQSQSQRQAWPSSSAGGGKAQDSGVL). The region spanning 35–182 (GPVSIDEVDT…LKLFRRMGCK (148 aa)) is the Tyrosine-protein phosphatase domain. Cysteine 126 acts as the Phosphocysteine intermediate in catalysis. The tract at residues 248–267 (LEHKPRDRPPQEVVPKEKEE) is disordered.

The protein belongs to the protein-tyrosine phosphatase family. Non-receptor class dual specificity subfamily. As to quaternary structure, interacts (via tyrosine-protein phosphatase domain) with bsk/JNK; the interaction dephosphorylates bsk.

It is found in the nucleus. The protein localises to the cytoplasm. It catalyses the reaction O-phospho-L-tyrosyl-[protein] + H2O = L-tyrosyl-[protein] + phosphate. It carries out the reaction O-phospho-L-seryl-[protein] + H2O = L-seryl-[protein] + phosphate. The catalysed reaction is O-phospho-L-threonyl-[protein] + H2O = L-threonyl-[protein] + phosphate. With respect to regulation, inhibited by the tyrosine phosphatase inhibitor sodium vanadate. Its function is as follows. Dual specificity phosphatase; can dephosphorylate both phosphotyrosine and phosphoserine or phosphothreonine residues. May suppress bsk/JNK activation during the immune response. This is Dual specificity protein phosphatase MPK-4 from Drosophila melanogaster (Fruit fly).